The following is a 5161-amino-acid chain: Nonribosomal peptide synthetase TES (5161 aa).

The tract at residues 37 to 436 (EEQAIARPNA…GRKDSQTKVR (400 aa)) is adenylation 1. Residues 569 to 645 (QPETEKEQIL…KLTSAAIPSV (77 aa)) form the Carrier 1 domain. Serine 606 is subject to O-(pantetheine 4'-phosphoryl)serine. The tract at residues 659-1098 (GHVAQSFAQG…LLCDVELSKL (440 aa)) is condensation 1. The segment at 1122-1522 (RQQTSLCPSR…GRMDGQVKIR (401 aa)) is adenylation 2. A methyltransferase (M) domain 1 region spans residues 1630-1742 (MNEWLDDTID…YLFKTTQQLL (113 aa)). The Carrier 2 domain maps to 2068–2141 (TRAESKIQQL…QLAAVAQEHV (74 aa)). The residue at position 2102 (serine 2102) is an O-(pantetheine 4'-phosphoryl)serine. The segment at 2179 to 2593 (EDIYPCSPLQ…MLTQDDEQQL (415 aa)) is condensation 2. The interval 2614-3010 (DQAKSRPEAD…GRKDGQVKVR (397 aa)) is adenylation 3. Residues 3139-3215 (KPETKHEMAL…RLANRLVDPP (77 aa)) form the Carrier 3 domain. Serine 3176 carries the O-(pantetheine 4'-phosphoryl)serine modification. The condensation 3 stretch occupies residues 3232–3668 (LQSFAQGRLW…VVPLMTVEAH (437 aa)). Positions 3694–4098 (FRQQAAMQPS…GRIDGQVKIR (405 aa)) are adenylation 4. A methyltransferase (M) domain 2 region spans residues 4203–4329 (EMKEWLEETI…KVDGVKTLFF (127 aa)). A Carrier 4 domain is found at 4643–4725 (RELSTAELKV…QFSQHEGEQK (83 aa)). Serine 4680 bears the O-(pantetheine 4'-phosphoryl)serine mark. The segment at 4785–5093 (FFLNLGTRVD…HQNLNEHPEF (309 aa)) is condensation 4.

The protein belongs to the NRP synthetase family.

Its pathway is phytotoxin biosynthesis. In terms of biological role, nonribosomal peptide synthetase; part of the gene cluster that mediates the biosynthesis of the phytotoxin tentoxin, an inhibitor the F1-ATPase activity of chloroplasts, resulting in chlorosis in sensitive plants. Tentoxin is a cyclic tetrapeptide that consists of four amino acid residues: glycine (Gly), alanine (Ala), leucine (Leu), and dehydrophenylalanine (DPhe). In addition, both the Ala and DPhe residues are N-methylated. The nonribosomal peptide synthetase TES assembles tentoxin from the four substrate amino acids. The adenylation domains of each of the 4 modules are responsible for the activation of Gly, Ala, Leu and DPhe, respectively. In addition, the N-methyltransferase domains in the second and fourth modules of TES could be responsible for N-methylation of Ala and DPhe residues. Finally, the condensation domain located in the termination module probably catalyzes the formation of the intramolecular macrocyclization and then the release of tentoxin. The cytochrome P450 monooxygenase TES1 is predicted to be involved in the formation of DPhe. The chain is Nonribosomal peptide synthetase TES from Alternaria alternata (Alternaria rot fungus).